Consider the following 121-residue polypeptide: Large ribosomal subunit protein bL12 (121 aa).

The protein belongs to the bacterial ribosomal protein bL12 family. Homodimer. Part of the ribosomal stalk of the 50S ribosomal subunit. Forms a multimeric L10(L12)X complex, where L10 forms an elongated spine to which 2 to 4 L12 dimers bind in a sequential fashion. Binds GTP-bound translation factors.

Its function is as follows. Forms part of the ribosomal stalk which helps the ribosome interact with GTP-bound translation factors. Is thus essential for accurate translation. This chain is Large ribosomal subunit protein bL12, found in Escherichia coli O45:K1 (strain S88 / ExPEC).